Consider the following 262-residue polypeptide: Serine O-acetyltransferase (262 aa).

Cys107 (acyl-thioester intermediate) is an active-site residue. Position 128 (Lys128) interacts with substrate. His200 acts as the Proton acceptor in catalysis. Glu202 is an active-site residue. Position 214 (Arg214) interacts with substrate.

It belongs to the MetA family.

The protein resides in the cytoplasm. The enzyme catalyses L-serine + acetyl-CoA = O-acetyl-L-serine + CoA. The catalysed reaction is L-homoserine + acetyl-CoA = O-acetyl-L-homoserine + CoA. It participates in amino-acid biosynthesis; L-cysteine biosynthesis; L-cysteine from L-serine: step 1/2. Transfers an acetyl group from acetyl-CoA to L-serine, forming acetyl-L-serine. In vitro, also has homoserine acetyl transferase activity. The sequence is that of Serine O-acetyltransferase from Lactobacillus acidophilus.